A 102-amino-acid chain; its full sequence is UPF0058 protein MTH_224 (102 aa).

It belongs to the UPF0058 family.

This chain is UPF0058 protein MTH_224, found in Methanothermobacter thermautotrophicus (strain ATCC 29096 / DSM 1053 / JCM 10044 / NBRC 100330 / Delta H) (Methanobacterium thermoautotrophicum).